Here is a 379-residue protein sequence, read N- to C-terminus: Guanine nucleotide-binding protein G(s) subunit alpha (379 aa).

In terms of domain architecture, G-alpha spans 38-379; that stretch reads STHRLLLLGA…RMHLRQYELL (342 aa). A G1 motif region spans residues 41 to 54; it reads RLLLLGAGESGKST. Residues 46-53, 182-188, 207-211, 276-279, and Ala351 contribute to the GTP site; these read GAGESGKS, LRCRVLT, DVGGQ, and NKQD. Positions 53 and 188 each coordinate Mg(2+). Positions 180–188 are G2 motif; that stretch reads DILRCRVLT. The tract at residues 203–212 is G3 motif; sequence FHMFDVGGQR. The G4 motif stretch occupies residues 272–279; the sequence is ILFLNKQD. Residues 349–354 are G5 motif; it reads TCAVDT.

It belongs to the G-alpha family. G(s) subfamily. In terms of assembly, g proteins are composed of 3 units; alpha, beta and gamma. The alpha chain contains the guanine nucleotide binding site.

Guanine nucleotide-binding proteins (G proteins) are involved as modulators or transducers in various transmembrane signaling systems. The G(s) protein is involved in hormonal regulation of adenylate cyclase: it activates the cyclase in response to beta-adrenergic stimuli. The sequence is that of Guanine nucleotide-binding protein G(s) subunit alpha from Schistosoma mansoni (Blood fluke).